A 72-amino-acid polypeptide reads, in one-letter code: MSLGVLAAAIAVGLGALGAGIGNGLIVSRTIEGIARQPELRPVLQTTMFIGVALVEALPIIGVVFSFIYLGR.

Helical transmembrane passes span 1–21 and 48–68; these read MSLGVLAAAIAVGLGALGAGI and MFIGVALVEALPIIGVVFSFI.

This sequence belongs to the ATPase C chain family. In terms of assembly, F-type ATPases have 2 components, F(1) - the catalytic core - and F(0) - the membrane proton channel. F(1) has five subunits: alpha(3), beta(3), gamma(1), delta(1), epsilon(1). F(0) has three main subunits: a(1), b(2) and c(10-14). The alpha and beta chains form an alternating ring which encloses part of the gamma chain. F(1) is attached to F(0) by a central stalk formed by the gamma and epsilon chains, while a peripheral stalk is formed by the delta and b chains.

It is found in the cell membrane. Functionally, f(1)F(0) ATP synthase produces ATP from ADP in the presence of a proton or sodium gradient. F-type ATPases consist of two structural domains, F(1) containing the extramembraneous catalytic core and F(0) containing the membrane proton channel, linked together by a central stalk and a peripheral stalk. During catalysis, ATP synthesis in the catalytic domain of F(1) is coupled via a rotary mechanism of the central stalk subunits to proton translocation. Its function is as follows. Key component of the F(0) channel; it plays a direct role in translocation across the membrane. A homomeric c-ring of between 10-14 subunits forms the central stalk rotor element with the F(1) delta and epsilon subunits. In Geobacillus kaustophilus (strain HTA426), this protein is ATP synthase subunit c.